The following is a 232-amino-acid chain: Large ribosomal subunit protein uL1 (232 aa).

The protein belongs to the universal ribosomal protein uL1 family. In terms of assembly, part of the 50S ribosomal subunit.

Functionally, binds directly to 23S rRNA. The L1 stalk is quite mobile in the ribosome, and is involved in E site tRNA release. Its function is as follows. Protein L1 is also a translational repressor protein, it controls the translation of the L11 operon by binding to its mRNA. In Liberibacter asiaticus (Citrus greening disease), this protein is Large ribosomal subunit protein uL1.